Here is a 295-residue protein sequence, read N- to C-terminus: Ethanolamine ammonia-lyase small subunit (295 aa).

Adenosylcob(III)alamin-binding residues include valine 207, glutamate 228, and cysteine 258.

The protein belongs to the EutC family. As to quaternary structure, the basic unit is a heterodimer which dimerizes to form tetramers. The heterotetramers trimerize; 6 large subunits form a core ring with 6 small subunits projecting outwards. The cofactor is adenosylcob(III)alamin.

The protein localises to the bacterial microcompartment. The enzyme catalyses ethanolamine = acetaldehyde + NH4(+). Its pathway is amine and polyamine degradation; ethanolamine degradation. In terms of biological role, catalyzes the deamination of various vicinal amino-alcohols to oxo compounds. Allows this organism to utilize ethanolamine as the sole source of nitrogen and carbon in the presence of external vitamin B12. This is Ethanolamine ammonia-lyase small subunit from Escherichia coli O139:H28 (strain E24377A / ETEC).